Reading from the N-terminus, the 644-residue chain is Macrolide export ATP-binding/permease protein MacB (644 aa).

The ABC transporter domain maps to 4–242; that stretch reads IECKNINRCF…SNVGRIREKA (239 aa). 40 to 47 is an ATP binding site; that stretch reads GQSGSGKS. The next 4 membrane-spanning stretches (helical) occupy residues 270-290, 524-544, 574-594, and 607-627; these read LLTM…VALG, IALI…LVSV, LICI…SLVF, and AASV…FGFM.

This sequence belongs to the ABC transporter superfamily. Macrolide exporter (TC 3.A.1.122) family. In terms of assembly, homodimer.

The protein localises to the cell inner membrane. Non-canonical ABC transporter that contains transmembrane domains (TMD), which form a pore in the inner membrane, and an ATP-binding domain (NBD), which is responsible for energy generation. Confers resistance against macrolides. This Neisseria gonorrhoeae (strain ATCC 700825 / FA 1090) protein is Macrolide export ATP-binding/permease protein MacB.